The chain runs to 296 residues: Nucleotide-binding protein SMU_1306c (296 aa).

13-20 (GMSGAGKT) provides a ligand contact to ATP. Position 63-66 (63-66 (DMRS)) interacts with GTP.

The protein belongs to the RapZ-like family.

In terms of biological role, displays ATPase and GTPase activities. This Streptococcus mutans serotype c (strain ATCC 700610 / UA159) protein is Nucleotide-binding protein SMU_1306c.